Here is a 783-residue protein sequence, read N- to C-terminus: Type 4 coupling protein DotL (783 aa).

The chain crosses the membrane as a helical span at residues 47–67 (VSYYFSEAATFLLIMGGIFFL). The interval 100-500 (NIARGITFFG…ICMKLEDPTE (401 aa)) is ATPase domain. An interaction with IcmS/IcmW region spans residues 671-773 (VEGALTIFSK…SAKISAEREK (103 aa)).

The T4BSS is a complex nanomachine composed of several subcomplexes. This subunit is part of the Type IV Coupling Complex (T4CC), a subcomplex composed of the DotLMNYZ core and the IcmSW-LvgA adapter subunits, linked by the C-terminal tail of DotL. Six DotLMNYZ hetero-pentameric units may assemble into a hexameric nanomachine, forming an inner membrane channel for effectors to pass through. Interacts directly with DotM. Interacts directly, via its C-terminal region, with the type IV adapter proteins IcmS and IcmW. Also interacts with DotN and LvgA via its C-terminal region.

The protein localises to the cell inner membrane. In terms of biological role, component of the Dot/Icm type IVB secretion system (T4BSS), which is used to inject bacterial effector proteins into eukaryotic host cells. Part of a subcomplex which recruits effector proteins and delivers them to the core transmembrane subcomplex. Plays a central role in the assembly of the subcomplex. Required for the recruitment of IcmS and IcmW to the inner membrane and for the translocation of adapter-dependent substrates. May have ATPase activity. The polypeptide is Type 4 coupling protein DotL (Legionella pneumophila subsp. pneumophila (strain Philadelphia 1 / ATCC 33152 / DSM 7513)).